The sequence spans 1360 residues: Zinc finger protein GLI1 (1360 aa).

A disordered region spans residues 198–245 (DTIGSKRLEDGSEGDISSPASVGTQDPLLGLLDGRDDLEKDDGKHEPE). A compositionally biased stretch (basic and acidic residues) spans 230–245 (DGRDDLEKDDGKHEPE). The C2H2-type 1 zinc finger occupies 250–275 (TNCHWESCTKEFDTQEHLVHHINNEH). An interaction with DNA region spans residues 298 to 306 (KAQYMLVVH). 3 C2H2-type zinc fingers span residues 316-340 (HKCTFEGCNKAYSRLENLKTHLRSH), 346-371 (YVCEHEGCNKAFSNASDRAKHQNRTH), and 377-402 (YVCKIPGCTKRYTDPSSLRKHVKTVH). Interaction with DNA regions lie at residues 360–365 (ASDRAK) and 390–396 (DPSSLRK). Disordered regions lie at residues 390–434 (DPSS…NVKG), 457–500 (ITLK…SFED), 718–740 (IIHPAQAPGAGIRRASDPARTGG), and 1120–1213 (YMNY…IQPQ). A compositionally biased stretch (low complexity) spans 461–473 (SQPSPGGQSSCSS). Residues 474–496 (ERSPLGSTNNNDSGVEMNANTGG) are compositionally biased toward polar residues. The segment covering 1134 to 1143 (SPSSQDSQSS) has biased composition (low complexity). Over residues 1173–1190 (RQHSVSSQSTYMGSPNQL) the composition is skewed to polar residues.

This sequence belongs to the GLI C2H2-type zinc-finger protein family.

It localises to the cytoplasm. The protein resides in the nucleus. Its function is as follows. Acts as a transcriptional activator. Binds to the DNA consensus sequence 5'-GACCACCCA-3'. May regulate the transcription of specific genes during normal development. Mediates SHH signaling. Plays a role in cell proliferation and differentiation via its role in SHH signaling. This is Zinc finger protein GLI1 (gli1) from Xenopus laevis (African clawed frog).